We begin with the raw amino-acid sequence, 457 residues long: MSGFSSGNVNSRVVDILSGVVPLLKLICLTVIGLLLAHPKTQLVPRATFRLLSKLVFALFLPCLIFTELGESITLDNIVQWWFIPVNVLLSAVVGSLIGYLVVLICRPPPEFNRFTIVMTAFGNTGNLLLAIVSSVCHTKTNPFGPNCNSRGVSYVSFAQWVAVILVYTVVYHMMEPPLEYYEVVEEEGVEIEEINVENHDASRPLLVEAEWPGIEDKETEHCKTPFIARVFNSISSFSQTSFPEVDLGGEYGGESSSPRSIQCLAEPRVMRRIRVVAEQTPVKHILQPPTIASLLAIIIGSVPQLKSVVFGYDAPLSFITDSLNIMGSAMVPSVMLVLGGMLSEGPNESTLGLRTTIGISVARLLVLPLVGIGIVMSADKLGLISSADPMFKFVLLLQYSTPSAILLGAIASLRGYAVREASALLFWQHIFALLSLTFYIVIFFKLTVETTVQGMQ.

The Lumenal segment spans residues 1 to 15 (MSGFSSGNVNSRVVD). The helical transmembrane segment at 16–36 (ILSGVVPLLKLICLTVIGLLL) threads the bilayer. Residues 37 to 54 (AHPKTQLVPRATFRLLSK) are Cytoplasmic-facing. The chain crosses the membrane as a helical span at residues 55–75 (LVFALFLPCLIFTELGESITL). At 76-85 (DNIVQWWFIP) the chain is on the lumenal side. Residues 86–106 (VNVLLSAVVGSLIGYLVVLIC) traverse the membrane as a helical segment. The Cytoplasmic portion of the chain corresponds to 107-116 (RPPPEFNRFT). Residues 117 to 137 (IVMTAFGNTGNLLLAIVSSVC) traverse the membrane as a helical segment. Over 138 to 151 (HTKTNPFGPNCNSR) the chain is Lumenal. Residues 152–172 (GVSYVSFAQWVAVILVYTVVY) traverse the membrane as a helical segment. Residues 173–291 (HMMEPPLEYY…PVKHILQPPT (119 aa)) lie on the Cytoplasmic side of the membrane. Residues 292-312 (IASLLAIIIGSVPQLKSVVFG) traverse the membrane as a helical segment. Residues 313-322 (YDAPLSFITD) are Lumenal-facing. Residues 323–343 (SLNIMGSAMVPSVMLVLGGML) traverse the membrane as a helical segment. Topologically, residues 344–356 (SEGPNESTLGLRT) are cytoplasmic. Residues 357–377 (TIGISVARLLVLPLVGIGIVM) form a helical membrane-spanning segment. Residues 378–393 (SADKLGLISSADPMFK) are Lumenal-facing. A helical membrane pass occupies residues 394 to 414 (FVLLLQYSTPSAILLGAIASL). Topologically, residues 415–424 (RGYAVREASA) are cytoplasmic. Residues 425 to 445 (LLFWQHIFALLSLTFYIVIFF) form a helical membrane-spanning segment. The Lumenal portion of the chain corresponds to 446-457 (KLTVETTVQGMQ).

It belongs to the auxin efflux carrier (TC 2.A.69.2) family. Expressed in seedlings, rosette and cauline leaves, flowers and siliques.

It is found in the endoplasmic reticulum membrane. Involved in cellular auxin homeostasis by regulating auxin metabolism. Regulates intracellular auxin accumulation at the endoplasmic reticulum and thus auxin availability for nuclear auxin signaling. This Arabidopsis thaliana (Mouse-ear cress) protein is Protein PIN-LIKES 2.